A 420-amino-acid polypeptide reads, in one-letter code: MGNTITEKILASHCGKKVVEPGEFIEPKIDIALSNDVTAPLAVKEFRKTGIKKVFDKNKIALVMDHFTPNKDILSAEHVKFVREFAKEHKIKHYYEGGNVGVEHALLPEKGIVVPGDVIIGADSHTCTYGALGAFSTGGGSTDIAAAMATGKIWFKVPNSIKFILNRKLNKWVSGKDIILYIIGLIGVDGALYNSMEFDGPLCKKLTMADRFTITNMAIEAGGKNGIFTPDEITENYVAKRAQRKYKFYISDKDAKYLKIYEIDCSKILPQVSMPFLPSNTKAVKDIKKTYIDQVVIGSCTNGRIEDLRVAASIIKKGKKVNSNVRTLIIPATPEVYSQALDEGLLRIFMDAGAIISAPTCGPCLGGHMGILASGEKCASTTNRNFRGRMGHVESQLFLVNPAVAAASAIKGYIASPDEI.

3 residues coordinate [4Fe-4S] cluster: Cys-300, Cys-361, and Cys-364.

Belongs to the aconitase/IPM isomerase family. LeuC type 2 subfamily. In terms of assembly, heterodimer of LeuC and LeuD. The cofactor is [4Fe-4S] cluster.

The catalysed reaction is (2R,3S)-3-isopropylmalate = (2S)-2-isopropylmalate. It participates in amino-acid biosynthesis; L-leucine biosynthesis; L-leucine from 3-methyl-2-oxobutanoate: step 2/4. In terms of biological role, catalyzes the isomerization between 2-isopropylmalate and 3-isopropylmalate, via the formation of 2-isopropylmaleate. The sequence is that of 3-isopropylmalate dehydratase large subunit from Endomicrobium trichonymphae.